Reading from the N-terminus, the 522-residue chain is Serine/threonine-protein kinase BSK1-2 (522 aa).

The segment at 1–54 (MGCCGSSLRVGSHAPEKPPRRARPPPPPPQPHHPRRPSFTLNAHQAAASSSAAS) is disordered. Gly2 is lipidated: N-myristoyl glycine. Residues 79 to 338 (ANIVSESGEK…KLVSILQPLQ (260 aa)) form the Protein kinase domain. Residues 85 to 93 (SGEKAPNLV) and Lys111 each bind ATP. The active-site Proton acceptor is the Asp205.

The protein belongs to the protein kinase superfamily. Ser/Thr protein kinase family.

The protein localises to the cell membrane. It catalyses the reaction L-seryl-[protein] + ATP = O-phospho-L-seryl-[protein] + ADP + H(+). It carries out the reaction L-threonyl-[protein] + ATP = O-phospho-L-threonyl-[protein] + ADP + H(+). Probable serine/threonine kinase that functions as a positive regulator of plant immunity. May be involved in the regulation of pattern-triggered immunity (PTI). Does not seem to be involved in responses to brassinosteroid (BR) signaling. This chain is Serine/threonine-protein kinase BSK1-2, found in Oryza sativa subsp. japonica (Rice).